The primary structure comprises 1585 residues: Sterol 3-beta-glucosyltransferase (1585 aa).

Positions 1–18 are enriched in pro residues; it reads MSPPISPTPPPLQPPFPP. 3 disordered regions span residues 1–151, 177–225, and 249–279; these read MSPP…ESSF, PWEE…PTHT, and YQYATPETSSRRTSAAGSESSSEGEVPLPKG. Polar residues-rich tracts occupy residues 65–92, 105–123, and 132–148; these read DQATNSSNDSLIPSRQAPNQEETENAIT, DAQTVRFSSSSPASYSTHE, and PRTSSRAPNTASSQMAE. The span at 178–194 shows a compositional bias: acidic residues; it reads WEEDDDSDDGEDDDEFI. Over residues 255 to 273 the composition is skewed to low complexity; that stretch reads ETSSRRTSAAGSESSSEGE. A GRAM 1 domain is found at 387–555; sequence ERLMEVFGLE…EAIVDVEKSP (169 aa). Residues 438-530 form the PH domain; it reads LLVKSGPLHK…WVKAIQKVMF (93 aa). Disordered regions lie at residues 625–645 and 666–852; these read TSHATIKRHGTDSSAEKLGMA and DGEP…GSES. Residues 670–689 are compositionally biased toward basic and acidic residues; sequence LEEHSQGPHHNDEDASHLPH. Composition is skewed to polar residues over residues 760-785, 806-817, and 827-840; these read TDSSTTVTESGPSLRSRTGRTKQASV, NKPSVVDSNSAE, and SWTSETSSGSQMVK. The GRAM 2 domain maps to 862–933; that stretch reads RKFRTFFALS…RDLYGLKAQK (72 aa). 10 residues coordinate UDP-alpha-D-glucose: S1043, R1044, D1046, I1358, H1360, H1373, G1377, T1378, D1397, and Q1398. The disordered stretch occupies residues 1499–1552; sequence NRVRSRSRSRSRSSQGRFSPRRHTVDDDGWSVVSGGSRSRSGSASAVTSPERRP. A compositionally biased stretch (low complexity) spans 1529-1545; it reads SVVSGGSRSRSGSASAV.

Belongs to the glycosyltransferase 28 family.

The protein localises to the cytoplasm. It is found in the membrane. It catalyses the reaction a sterol + UDP-alpha-D-glucose = a sterol 3-beta-D-glucoside + UDP + H(+). The enzyme catalyses ergosterol + UDP-alpha-D-glucose = ergosteryl 3-beta-D-glucoside + UDP + H(+). Sterol glycosyltransferase responsible for the glycosylation of ergosterol to form ergosterol-glucoside. This Cryptococcus neoformans var. neoformans serotype D (strain B-3501A) (Filobasidiella neoformans) protein is Sterol 3-beta-glucosyltransferase.